A 170-amino-acid polypeptide reads, in one-letter code: UPF0690 protein C1orf52 homolog (170 aa).

Disordered regions lie at residues 1 to 56 (MAAE…PDEL) and 124 to 170 (SNVY…KRKV). Residues 46–56 (DTKKLPGPDEL) show a composition bias toward basic and acidic residues. Over residues 144–159 (EEEEAREDSPPSDDEQ) the composition is skewed to acidic residues.

It belongs to the UPF0690 family.

The protein is UPF0690 protein C1orf52 homolog of Xenopus tropicalis (Western clawed frog).